A 721-amino-acid polypeptide reads, in one-letter code: WD repeat and coiled-coil-containing protein (721 aa).

N-acetylmethionine is present on M1. WD repeat units lie at residues 55–98 and 154–194; these read GQFE…MESS and NTQG…LHRC. Phosphoserine is present on residues S299, S468, S501, and S523. Over residues 520-537 the composition is skewed to polar residues; the sequence is QPASLPRHSSTPDHTSTL. A disordered region spans residues 520-553; the sequence is QPASLPRHSSTPDHTSTLEPPRLPQRKNLQSEKE. At T530 the chain carries Phosphothreonine. The interval 539 to 545 is interaction with HCK; it reads PPRLPQR. Residues 556–584 adopt a coiled-coil conformation; it reads QLSKEVEILSRNLVEMQRCLSELTNRLHN. Phosphoserine occurs at positions 686 and 690.

In terms of assembly, oligomer. Interacts with HCK (via SH3 domain). Post-translationally, phosphorylated on Tyr when associated with HCK.

The protein is WD repeat and coiled-coil-containing protein of Homo sapiens (Human).